The sequence spans 572 residues: Proline--tRNA ligase (572 aa).

Belongs to the class-II aminoacyl-tRNA synthetase family. ProS type 1 subfamily. Homodimer.

It localises to the cytoplasm. The enzyme catalyses tRNA(Pro) + L-proline + ATP = L-prolyl-tRNA(Pro) + AMP + diphosphate. Catalyzes the attachment of proline to tRNA(Pro) in a two-step reaction: proline is first activated by ATP to form Pro-AMP and then transferred to the acceptor end of tRNA(Pro). As ProRS can inadvertently accommodate and process non-cognate amino acids such as alanine and cysteine, to avoid such errors it has two additional distinct editing activities against alanine. One activity is designated as 'pretransfer' editing and involves the tRNA(Pro)-independent hydrolysis of activated Ala-AMP. The other activity is designated 'posttransfer' editing and involves deacylation of mischarged Ala-tRNA(Pro). The misacylated Cys-tRNA(Pro) is not edited by ProRS. The protein is Proline--tRNA ligase of Yersinia pseudotuberculosis serotype IB (strain PB1/+).